The sequence spans 558 residues: S-layer protein (558 aa).

A signal peptide spans 1–28; that stretch reads MAMSLKKIGAIAVGGAMVATALASGVAA. N-linked (GlcNAc...) asparagine glycans are attached at residues Asn112, Asn138, Asn158, Asn197, Asn226, Asn291, and Asn374.

Belongs to the Mj S-layer protein family.

It localises to the secreted. The protein localises to the cell wall. The protein resides in the S-layer. Functionally, S-layer protein. The S-layer is a paracrystalline mono-layered assembly of proteins which coat the surface of the cell. The polypeptide is S-layer protein (sla) (Methanocaldococcus jannaschii (strain ATCC 43067 / DSM 2661 / JAL-1 / JCM 10045 / NBRC 100440) (Methanococcus jannaschii)).